Reading from the N-terminus, the 403-residue chain is MKIRSAKVIVTCPGRNLVTLKIETDEGVYGIGDATLNGREKSVVSYLEDHVIPTLIGKDPQRVEDIWQYLYRGAYWRRGPVGMTAIAAVDVALWDIKAKLAGMPLYQLLGGKSREKVMVYGHATGLDIESCLEEVRKHVELGYKAVRVQCGIPGIPTTYGVSKEAGKPYEPADSALPAEHVWSTEKYLNNVPELFAAVRKEFGEDLHILHDVHHRLTPIQAARLGKEVEKFHLFWLEDCTAVENQSSYELIRKHTTTPLAIGEVFNSLSDCQELIQNQLIDYIRATITHAGGITNIRRIADFASVFHVKTGFHGATDLSPVCMGAALHFDTWVPNFGIQEHMPHTKETDLVFPHAYEFNDGFFTPGDVPGHGVDIDEEIAAKYPYKPAYLPVNRLEDGTLWNW.

The substrate site is built by N37 and H122. Y159 functions as the Proton donor/acceptor in the catalytic mechanism. D211 serves as a coordination point for Mg(2+). H213 acts as the Proton donor/acceptor in catalysis. Mg(2+)-binding residues include E237 and E263. 5 residues coordinate substrate: E263, R284, H313, D317, and E340.

The protein belongs to the mandelate racemase/muconate lactonizing enzyme family. GalD subfamily. Mg(2+) is required as a cofactor.

The enzyme catalyses D-mannonate = 2-dehydro-3-deoxy-D-gluconate + H2O. In terms of biological role, has low D-mannonate dehydratase activity (in vitro), suggesting that this is not a physiological substrate and that it has no significant role in D-mannonate degradation in vivo. Has no detectable activity with a panel of 70 other acid sugars (in vitro). This chain is D-galactonate dehydratase family member Mmwyl1_0037, found in Marinomonas sp. (strain MWYL1).